The sequence spans 847 residues: B-cell receptor CD22 (847 aa).

The N-terminal stretch at 1-19 (MHLLGPWLLLLVLEYLAFS) is a signal peptide. Residues 20 to 138 (DSSKWVFEHP…MERIHLNVSE (119 aa)) form the Ig-like V-type domain. Residues 20–687 (DSSKWVFEHP…YYSPETIGRR (668 aa)) lie on the Extracellular side of the membrane. Disulfide bonds link C39–C167, C44–C102, and C161–C219. N-linked (GlcNAc...) asparagine glycans are attached at residues N67, N101, and N112. Position 120 (R120) interacts with N-acetylneuraminate. N-linked (GlcNAc...) asparagine glycosylation is found at N135, N164, and N231. Ig-like C2-type domains lie at 143–235 (PHIQ…DTVQ), 242–326 (PKLE…VFLQ), 331–416 (PEPS…LDVQ), 419–500 (PKKV…VALN), 505–582 (PRDV…QTAS), and 593–676 (PRRL…STLT). Intrachain disulfides connect C265–C309, C353–C396, C442–C484, and C529–C571. N-linked (GlcNAc...) asparagine glycosylation is found at N363, N445, and N479. N-linked (GlcNAc...) asparagine glycosylation is found at N574 and N634. C616 and C659 are joined by a disulfide. A helical transmembrane segment spans residues 688–706 (VAVGLGSCLAILILAICGL). Residues 707-847 (KLQRRWKRTQ…ENVDYVILKH (141 aa)) lie on the Cytoplasmic side of the membrane. Phosphoserine occurs at positions 725, 726, and 729. Short sequence motifs (ITIM motif) lie at residues 760–765 (ISYTTL) and 794–799 (VTYSAL). Y762 carries the post-translational modification Phosphotyrosine. Phosphotyrosine occurs at positions 807, 822, and 842. Short sequence motifs (ITIM motif) lie at residues 820 to 825 (IHYSEL) and 840 to 845 (VDYVIL).

It belongs to the immunoglobulin superfamily. SIGLEC (sialic acid binding Ig-like lectin) family. Predominantly monomer of isoform CD22-beta. Also found as heterodimer of isoform CD22-beta and a shorter isoform. Interacts with PTPN6/SHP-1, LYN, SYK, PIK3R1/PIK3R2 and PLCG1 upon phosphorylation. Interacts with GRB2, INPP5D and SHC1 upon phosphorylation. May form a complex with INPP5D/SHIP, GRB2 and SHC1. In terms of processing, phosphorylation of Tyr-762, Tyr-807 and Tyr-822 are involved in binding to SYK, GRB2 and SYK, respectively. Phosphorylation of Tyr-842 is involved in binding to SYK, PLCG2 and PIK3R1/PIK3R2. Phosphorylated on tyrosine residues by LYN. In terms of tissue distribution, B-lymphocytes.

Its subcellular location is the cell membrane. Functionally, most highly expressed siglec (sialic acid-binding immunoglobulin-like lectin) on B-cells that plays a role in various aspects of B-cell biology including differentiation, antigen presentation, and trafficking to bone marrow. Binds to alpha 2,6-linked sialic acid residues of surface molecules such as CD22 itself, CD45 and IgM in a cis configuration. Can also bind to ligands on other cells as an adhesion molecule in a trans configuration. Acts as an inhibitory coreceptor on the surface of B-cells and inhibits B-cell receptor induced signaling, characterized by inhibition of the calcium mobilization and cellular activation. Mechanistically, the immunoreceptor tyrosine-based inhibitory motif domain is phosphorylated by the Src kinase LYN, which in turn leads to the recruitment of the protein tyrosine phosphatase 1/PTPN6, leading to the negative regulation of BCR signaling. If this negative signaling from is of sufficient strength, apoptosis of the B-cell can be induced. The protein is B-cell receptor CD22 of Homo sapiens (Human).